The primary structure comprises 412 residues: FAD-dependent monooxygenase nscC (412 aa).

Residues 1–21 (MGKQQETILIIGAGIAGLTTS) form the signal peptide. Positions 35 and 46 each coordinate FAD. The N-linked (GlcNAc...) asparagine glycan is linked to asparagine 92. Arginine 119 provides a ligand contact to FAD. N-linked (GlcNAc...) asparagine glycosylation is found at asparagine 170 and asparagine 231. FAD contacts are provided by aspartate 326 and glycine 339.

Belongs to the paxM FAD-dependent monooxygenase family. Requires FAD as cofactor.

It functions in the pathway secondary metabolite biosynthesis. FAD-dependent monooxygenase; part of the gene cluster that mediates the biosynthesis of neosartoricin B, a prenylated anthracenone that probably exhibits T-cell antiproliferative activity, suggestive of a physiological role as an immunosuppressive agent. The non-reducing polyketide synthase nscA probably synthesizes and cyclizes the decaketide backbone. The hydrolase nscB then mediates the product release through hydrolysis followed by spontaneous decarboxylation. The prenyltransferase nscD catalyzes the addition of the dimethylallyl group to the aromatic C5. The FAD-dependent monooxygenase nscC is then responsible for the stereospecific hydroxylation at C2. Neosartoricin B can be converted into two additional compounds neosartoricins C and D. Neosartoricin C is a spirocyclic compound that is cyclized through the attack of C3 hydroxyl on C14, followed by dehydration. On the other hand, neosartoricin D is a further cyclized compound in which attack of C2 on C14 in neosartoricin C results in the formation of the acetal-containing dioxabicyclo-octanone ring. Both of these compounds are novel and possibly represent related metabolites of the gene cluster. In Trichophyton verrucosum (strain HKI 0517), this protein is FAD-dependent monooxygenase nscC.